Consider the following 148-residue polypeptide: Protein E6 (148 aa).

Zinc fingers lie at residues Cys-34–Cys-71 and Cys-108–Cys-144.

This sequence belongs to the papillomaviridae E6 protein family. In terms of assembly, forms homodimers. Interacts with ubiquitin-protein ligase UBE3A/E6-AP; this interaction stimulates UBE3A ubiquitin activity. Interacts with host BAK1.

The protein resides in the host cytoplasm. It is found in the host nucleus. Its function is as follows. Plays a major role in the induction and maintenance of cellular transformation. E6 associates with host UBE3A/E6-AP ubiquitin-protein ligase and modulates its activity. Protects host keratinocytes from apoptosis by mediating the degradation of host BAK1. May also inhibit host immune response. This chain is Protein E6, found in Human papillomavirus 9.